The sequence spans 239 residues: 1-(5-phosphoribosyl)-5-[(5-phosphoribosylamino)methylideneamino] imidazole-4-carboxamide isomerase (239 aa).

Catalysis depends on Asp9, which acts as the Proton acceptor. The Proton donor role is filled by Asp131.

It belongs to the HisA/HisF family.

It localises to the cytoplasm. It catalyses the reaction 1-(5-phospho-beta-D-ribosyl)-5-[(5-phospho-beta-D-ribosylamino)methylideneamino]imidazole-4-carboxamide = 5-[(5-phospho-1-deoxy-D-ribulos-1-ylimino)methylamino]-1-(5-phospho-beta-D-ribosyl)imidazole-4-carboxamide. It functions in the pathway amino-acid biosynthesis; L-histidine biosynthesis; L-histidine from 5-phospho-alpha-D-ribose 1-diphosphate: step 4/9. This chain is 1-(5-phosphoribosyl)-5-[(5-phosphoribosylamino)methylideneamino] imidazole-4-carboxamide isomerase, found in Bacteroides thetaiotaomicron (strain ATCC 29148 / DSM 2079 / JCM 5827 / CCUG 10774 / NCTC 10582 / VPI-5482 / E50).